We begin with the raw amino-acid sequence, 174 residues long: NADH-quinone oxidoreductase subunit I (174 aa).

4Fe-4S ferredoxin-type domains lie at 44 to 74 (LNRY…VEGD) and 90 to 119 (RVYQ…MTND). Cys54, Cys57, Cys60, Cys64, Cys99, Cys102, Cys105, and Cys109 together coordinate [4Fe-4S] cluster.

Belongs to the complex I 23 kDa subunit family. In terms of assembly, NDH-1 is composed of 14 different subunits. Subunits NuoA, H, J, K, L, M, N constitute the membrane sector of the complex. [4Fe-4S] cluster is required as a cofactor.

The protein resides in the cell membrane. The catalysed reaction is a quinone + NADH + 5 H(+)(in) = a quinol + NAD(+) + 4 H(+)(out). Its function is as follows. NDH-1 shuttles electrons from NADH, via FMN and iron-sulfur (Fe-S) centers, to quinones in the respiratory chain. The immediate electron acceptor for the enzyme in this species is believed to be menaquinone. Couples the redox reaction to proton translocation (for every two electrons transferred, four hydrogen ions are translocated across the cytoplasmic membrane), and thus conserves the redox energy in a proton gradient. This Mycobacterium sp. (strain JLS) protein is NADH-quinone oxidoreductase subunit I.